Consider the following 558-residue polypeptide: Formate--tetrahydrofolate ligase 2 (558 aa).

ATP is bound at residue 67–74 (TPAGEGKT).

It belongs to the formate--tetrahydrofolate ligase family.

It catalyses the reaction (6S)-5,6,7,8-tetrahydrofolate + formate + ATP = (6R)-10-formyltetrahydrofolate + ADP + phosphate. The protein operates within one-carbon metabolism; tetrahydrofolate interconversion. The polypeptide is Formate--tetrahydrofolate ligase 2 (Desulfitobacterium hafniense (strain Y51)).